Consider the following 249-residue polypeptide: tRNA pseudouridine synthase A (249 aa).

The active-site Nucleophile is aspartate 53. Residue tyrosine 111 participates in substrate binding.

This sequence belongs to the tRNA pseudouridine synthase TruA family. Homodimer.

The catalysed reaction is uridine(38/39/40) in tRNA = pseudouridine(38/39/40) in tRNA. Its function is as follows. Formation of pseudouridine at positions 38, 39 and 40 in the anticodon stem and loop of transfer RNAs. The protein is tRNA pseudouridine synthase A of Streptococcus mutans serotype c (strain ATCC 700610 / UA159).